Reading from the N-terminus, the 356-residue chain is D-alanine--D-alanine ligase (356 aa).

The ATP-grasp domain maps to Lys-146–Gln-350. An ATP-binding site is contributed by Lys-173 to Glu-228. 3 residues coordinate Mg(2+): Asp-305, Glu-317, and Asn-319.

Belongs to the D-alanine--D-alanine ligase family. Requires Mg(2+) as cofactor. It depends on Mn(2+) as a cofactor.

It is found in the cytoplasm. The enzyme catalyses 2 D-alanine + ATP = D-alanyl-D-alanine + ADP + phosphate + H(+). It participates in cell wall biogenesis; peptidoglycan biosynthesis. In terms of biological role, cell wall formation. The polypeptide is D-alanine--D-alanine ligase (Corynebacterium aurimucosum (strain ATCC 700975 / DSM 44827 / CIP 107346 / CN-1) (Corynebacterium nigricans)).